Here is a 116-residue protein sequence, read N- to C-terminus: Large ribosomal subunit protein uL22 (116 aa).

It belongs to the universal ribosomal protein uL22 family. As to quaternary structure, part of the 50S ribosomal subunit.

This protein binds specifically to 23S rRNA; its binding is stimulated by other ribosomal proteins, e.g. L4, L17, and L20. It is important during the early stages of 50S assembly. It makes multiple contacts with different domains of the 23S rRNA in the assembled 50S subunit and ribosome. In terms of biological role, the globular domain of the protein is located near the polypeptide exit tunnel on the outside of the subunit, while an extended beta-hairpin is found that lines the wall of the exit tunnel in the center of the 70S ribosome. The chain is Large ribosomal subunit protein uL22 from Sulfurihydrogenibium sp. (strain YO3AOP1).